The following is a 241-amino-acid chain: L-aspartate dehydrogenase (241 aa).

2 residues coordinate NAD(+): alanine 109 and asparagine 164. Residue histidine 193 is part of the active site.

This sequence belongs to the L-aspartate dehydrogenase family.

The catalysed reaction is L-aspartate + NADP(+) + H2O = oxaloacetate + NH4(+) + NADPH + H(+). It catalyses the reaction L-aspartate + NAD(+) + H2O = oxaloacetate + NH4(+) + NADH + H(+). The protein operates within cofactor biosynthesis; NAD(+) biosynthesis; iminoaspartate from L-aspartate (dehydrogenase route): step 1/1. Its function is as follows. Specifically catalyzes the NAD or NADP-dependent dehydrogenation of L-aspartate to iminoaspartate. This Thermotoga sp. (strain RQ2) protein is L-aspartate dehydrogenase.